Consider the following 184-residue polypeptide: Holliday junction branch migration complex subunit RuvA (184 aa).

Residues 1–64 are domain I; that stretch reads MIKAIEGVVT…EDANLLYGFL (64 aa). A domain II region spans residues 65–134; sequence DANEQKMFEM…IAELSDTKLI (70 aa). Positions 134–137 are flexible linker; it reads ISDE. The interval 138–184 is domain III; sequence SVPSYQNEALLALEALGFKREKIVKILPDCKSENTSDLIKEALKKLG.

This sequence belongs to the RuvA family. Homotetramer. Forms an RuvA(8)-RuvB(12)-Holliday junction (HJ) complex. HJ DNA is sandwiched between 2 RuvA tetramers; dsDNA enters through RuvA and exits via RuvB. An RuvB hexamer assembles on each DNA strand where it exits the tetramer. Each RuvB hexamer is contacted by two RuvA subunits (via domain III) on 2 adjacent RuvB subunits; this complex drives branch migration. In the full resolvosome a probable DNA-RuvA(4)-RuvB(12)-RuvC(2) complex forms which resolves the HJ.

Its subcellular location is the cytoplasm. Functionally, the RuvA-RuvB-RuvC complex processes Holliday junction (HJ) DNA during genetic recombination and DNA repair, while the RuvA-RuvB complex plays an important role in the rescue of blocked DNA replication forks via replication fork reversal (RFR). RuvA specifically binds to HJ cruciform DNA, conferring on it an open structure. The RuvB hexamer acts as an ATP-dependent pump, pulling dsDNA into and through the RuvAB complex. HJ branch migration allows RuvC to scan DNA until it finds its consensus sequence, where it cleaves and resolves the cruciform DNA. The protein is Holliday junction branch migration complex subunit RuvA of Campylobacter concisus (strain 13826).